A 793-amino-acid chain; its full sequence is Neurobeachin (793 aa).

Disordered regions lie at residues 68–92 (ENIK…TGAK) and 685–793 (RETA…EILK). 4 stretches are compositionally biased toward polar residues: residues 77 to 90 (NVST…QTTG), 689 to 710 (RSGS…STET), 750 to 762 (NILN…TSTG), and 782 to 793 (ESLTESPSEILK).

It belongs to the WD repeat neurobeachin family. Interacts with RII subunit of PKA. In terms of tissue distribution, forebrain and cerebellum.

Its subcellular location is the cytoplasm. The protein localises to the membrane. Its function is as follows. Binds to type II regulatory subunits of protein kinase A and anchors/targets them to the membrane. May anchor the kinase to cytoskeletal and/or organelle-associated proteins. In Gallus gallus (Chicken), this protein is Neurobeachin (NBEA).